Consider the following 532-residue polypeptide: CTP synthase (532 aa).

The amidoligase domain stretch occupies residues 1 to 267 (MAKFIFVTGG…QDIIIEQLQL (267 aa)). A CTP-binding site is contributed by Ser13. Residue Ser13 coordinates UTP. 14–19 (GLGKGI) contributes to the ATP binding site. Tyr54 contributes to the L-glutamine binding site. Asp71 is an ATP binding site. Asp71 and Glu141 together coordinate Mg(2+). Residues 148–150 (DIE), 188–193 (KTKPIQ), and Lys224 each bind CTP. UTP contacts are provided by residues 188-193 (KTKPIQ) and Lys224. One can recognise a Glutamine amidotransferase type-1 domain in the interval 292–532 (EISFVGKYIE…FIKAIVENNK (241 aa)). Gly354 contributes to the L-glutamine binding site. The active-site Nucleophile; for glutamine hydrolysis is Cys381. Residues 382–385 (LGMQ), Glu405, and Arg461 contribute to the L-glutamine site. Catalysis depends on residues His506 and Glu508.

The protein belongs to the CTP synthase family. Homotetramer.

The enzyme catalyses UTP + L-glutamine + ATP + H2O = CTP + L-glutamate + ADP + phosphate + 2 H(+). It catalyses the reaction L-glutamine + H2O = L-glutamate + NH4(+). The catalysed reaction is UTP + NH4(+) + ATP = CTP + ADP + phosphate + 2 H(+). It participates in pyrimidine metabolism; CTP biosynthesis via de novo pathway; CTP from UDP: step 2/2. With respect to regulation, allosterically activated by GTP, when glutamine is the substrate; GTP has no effect on the reaction when ammonia is the substrate. The allosteric effector GTP functions by stabilizing the protein conformation that binds the tetrahedral intermediate(s) formed during glutamine hydrolysis. Inhibited by the product CTP, via allosteric rather than competitive inhibition. In terms of biological role, catalyzes the ATP-dependent amination of UTP to CTP with either L-glutamine or ammonia as the source of nitrogen. Regulates intracellular CTP levels through interactions with the four ribonucleotide triphosphates. This is CTP synthase from Mycoplasma mycoides subsp. mycoides SC (strain CCUG 32753 / NCTC 10114 / PG1).